A 176-amino-acid chain; its full sequence is Pituitary adenylate cyclase-activating polypeptide (176 aa).

Residues 1-24 (MTMCSGARLALLVYGIIMHSSVYS) form the signal peptide. Positions 25-79 (SPAAAGLRFPGIRPEEEAYGEDGNPLPDFDGSEPPGAGSPASAPRAAAAWYRPAG) are excised as a propeptide. The interval 39 to 68 (EEEAYGEDGNPLPDFDGSEPPGAGSPASAP) is disordered. Residues 56–68 (SEPPGAGSPASAP) show a composition bias toward low complexity. Residues 150 to 158 (VKKYLAAVL) are important for receptor binding. A Leucine amide modification is found at leucine 158. Lysine 169 carries the lysine amide modification. A propeptide spanning residues 173–176 (IAYL) is cleaved from the precursor.

It belongs to the glucagon family.

Its subcellular location is the secreted. PACAP is a neuropeptide involved in diverse array of physiological processes through activating the PACAP subfamily of class B1 G protein-coupled receptors: VIP receptor 1 (VIPR1), VIP receptor 2 (VIPR2), and PACAP type I receptor (ADCYAP1R1). Exerts neuroprotective and general cytoprotective effects due to anti-apoptotic, anti-inflammatory, and antioxidant actions. Promotes neuron projection development through the RAPGEF2/Rap1/B-Raf/ERK pathway. In chromaffin cells, induces long-lasting increase of intracellular calcium concentrations and neuroendocrine secretion. Involved in the control of glucose homeostasis, induces insulin secretion by pancreatic beta cells. PACAP exists in two bioactive forms from proteolysis of the same precursor protein, PACAP27 and PACAP38, which differ by eleven amino acid residues in the C-terminus. The polypeptide is Pituitary adenylate cyclase-activating polypeptide (Homo sapiens (Human)).